The chain runs to 136 residues: MATLVYFSSLSENTHRFIVRLNLPARRIPLDSSQQLQVSEPYILVVPSYGGGTRHGAVPKQVIQFLNDINNRQLIRGVIAAGNRNFGEAFCLAGDIIARKCHVPYLYRFELMGTSDDIANIYKGVTEFWQRQTAHS.

This sequence belongs to the NrdI family.

In terms of biological role, probably involved in ribonucleotide reductase function. The sequence is that of Protein NrdI from Erwinia tasmaniensis (strain DSM 17950 / CFBP 7177 / CIP 109463 / NCPPB 4357 / Et1/99).